The sequence spans 120 residues: MNRIMLLAKIHRATVTEADLHYEGSCGIDEDLLDAANMREFEKIELYNINNGNRFSTYIIKAVRGSGIISLNGAAARKAHVGDHLIICTYGSVPDAEVNNHVPKIVLVGDNNSIKEIKKI.

Catalysis depends on Ser-25, which acts as the Schiff-base intermediate with substrate; via pyruvic acid. Ser-25 bears the Pyruvic acid (Ser) mark. Thr-57 is a binding site for substrate. Residue Tyr-58 is the Proton donor of the active site. 73–75 contributes to the substrate binding site; it reads GAA.

It belongs to the PanD family. Heterooctamer of four alpha and four beta subunits. Pyruvate serves as cofactor. Post-translationally, is synthesized initially as an inactive proenzyme, which is activated by self-cleavage at a specific serine bond to produce a beta-subunit with a hydroxyl group at its C-terminus and an alpha-subunit with a pyruvoyl group at its N-terminus.

It is found in the cytoplasm. It carries out the reaction L-aspartate + H(+) = beta-alanine + CO2. It functions in the pathway cofactor biosynthesis; (R)-pantothenate biosynthesis; beta-alanine from L-aspartate: step 1/1. Catalyzes the pyruvoyl-dependent decarboxylation of aspartate to produce beta-alanine. The polypeptide is Aspartate 1-decarboxylase (Polynucleobacter asymbioticus (strain DSM 18221 / CIP 109841 / QLW-P1DMWA-1) (Polynucleobacter necessarius subsp. asymbioticus)).